A 358-amino-acid chain; its full sequence is Chitin synthase export chaperone (358 aa).

7 helical membrane passes run isoleucine 49 to methionine 69, phenylalanine 88 to proline 108, phenylalanine 117 to phenylalanine 137, phenylalanine 159 to leucine 179, valine 185 to methionine 205, leucine 220 to phenylalanine 240, and histidine 250 to tyrosine 270. The tract at residues alanine 321–tyrosine 358 is disordered. The segment covering tyrosine 347–tyrosine 358 has biased composition (polar residues).

Belongs to the CHS7 family. As to quaternary structure, interacts with chs-3.

It is found in the endoplasmic reticulum membrane. Functionally, chaperone required for the export of the chitin synthase chs-3 from the endoplasmic reticulum. This is Chitin synthase export chaperone (csc-1) from Neurospora crassa (strain ATCC 24698 / 74-OR23-1A / CBS 708.71 / DSM 1257 / FGSC 987).